Consider the following 214-residue polypeptide: NKG2-D type II integral membrane protein (214 aa).

The Cytoplasmic portion of the chain corresponds to 1-56; sequence MGWIRDRRSPSSMEIRELHNRDVINRGAFKSRQKRTQTLITSKCGENPSPFFLARS. The helical; Signal-anchor for type II membrane protein transmembrane segment at 57 to 77 threads the bilayer; the sequence is IAIAMGIRFIVMVMIYSGMII. The Extracellular segment spans residues 78 to 214; that stretch reads NLLFNQEAPS…NTYICMKRTV (137 aa). Intrachain disulfides connect Cys94-Cys103 and Cys97-Cys108. Residues 98-210 enclose the C-type lectin domain; sequence PKNWICYRNS…CLTLNTYICM (113 aa). 4 N-linked (GlcNAc...) asparagine glycosylation sites follow: Asn113, Asn129, Asn161, and Asn184. Cystine bridges form between Cys125-Cys209 and Cys187-Cys201.

In terms of assembly, homodimer; disulfide-linked. Heterohexamer composed of two subunits of KLRK1 and four subunits of HCST/DAP10. Interacts (via transmembrane domain) with HCST/DAP10 (via transmembrane domain); the interaction is required for KLRK1 NK cell surface and induces NK cell-mediated cytotoxicity. Can form disulfide-bonded heterodimer with CD94. Interacts with CEACAM1; recruits PTPN6 that dephosphorylates VAV1. In terms of tissue distribution, detected in peripheral blood leukocytes, macrophages, monocytes and natural killer cells.

It is found in the cell membrane. Functions as an activating and costimulatory receptor involved in immunosurveillance upon binding to various cellular stress-inducible ligands displayed at the surface of autologous tumor cells and virus-infected cells. Provides both stimulatory and costimulatory innate immune responses on activated killer (NK) cells, leading to cytotoxic activity. Acts as a costimulatory receptor for T-cell receptor (TCR) in CD8(+) T-cell-mediated adaptive immune responses by amplifying T-cell activation. Stimulates perforin-mediated elimination of ligand-expressing tumor cells. Signaling involves calcium influx, culminating in the expression of TNF-alpha. Participates in NK cell-mediated bone marrow graft rejection. May play a regulatory role in differentiation and survival of NK cells. Binds to ligands belonging to various subfamilies of MHC class I-related glycoproteins. In Sus scrofa (Pig), this protein is NKG2-D type II integral membrane protein (KLRK1).